Reading from the N-terminus, the 237-residue chain is Probable GTP-binding protein EngB (237 aa).

The region spanning 13–188 is the EngB-type G domain; sequence TGYEIAFAGR…ASVMAGRLNY (176 aa). GTP is bound by residues 21 to 28, 48 to 52, 67 to 70, 134 to 137, and 167 to 169; these read GRSNAGKS, GRTQM, DLPG, TKAD, and FSS. Serine 28 and threonine 50 together coordinate Mg(2+). Residues 207–220 show a composition bias toward acidic residues; it reads DDLNDELMDQDETS. The interval 207-237 is disordered; it reads DDLNDELMDQDETSEFNTENIDDHLDQEPKI. Positions 227–237 are enriched in basic and acidic residues; the sequence is IDDHLDQEPKI.

This sequence belongs to the TRAFAC class TrmE-Era-EngA-EngB-Septin-like GTPase superfamily. EngB GTPase family. It depends on Mg(2+) as a cofactor.

Necessary for normal cell division and for the maintenance of normal septation. This Acinetobacter baylyi (strain ATCC 33305 / BD413 / ADP1) protein is Probable GTP-binding protein EngB.